Reading from the N-terminus, the 145-residue chain is Large ribosomal subunit protein uL15 (145 aa).

The disordered stretch occupies residues 1–58 (MFNLLKPKGASKRRKIVGRGPGSGLGKTSGRGQKGQKARNTSPRLGFEGGQTPLYRRL). Gly residues predominate over residues 19–33 (RGPGSGLGKTSGRGQ).

Belongs to the universal ribosomal protein uL15 family. As to quaternary structure, part of the 50S ribosomal subunit.

Its function is as follows. Binds to the 23S rRNA. The polypeptide is Large ribosomal subunit protein uL15 (Borrelia garinii subsp. bavariensis (strain ATCC BAA-2496 / DSM 23469 / PBi) (Borreliella bavariensis)).